A 671-amino-acid polypeptide reads, in one-letter code: DNA ligase (671 aa).

Residues 32–36 (DAEYD), 81–82 (SL), and Glu113 contribute to the NAD(+) site. Residue Lys115 is the N6-AMP-lysine intermediate of the active site. 4 residues coordinate NAD(+): Arg136, Glu173, Lys290, and Lys314. Residues Cys408, Cys411, Cys426, and Cys432 each contribute to the Zn(2+) site. One can recognise a BRCT domain in the interval 593 to 671 (EIDSPFAGKT…EAEMIRLLDA (79 aa)).

Belongs to the NAD-dependent DNA ligase family. LigA subfamily. The cofactor is Mg(2+). Mn(2+) is required as a cofactor.

The catalysed reaction is NAD(+) + (deoxyribonucleotide)n-3'-hydroxyl + 5'-phospho-(deoxyribonucleotide)m = (deoxyribonucleotide)n+m + AMP + beta-nicotinamide D-nucleotide.. Functionally, DNA ligase that catalyzes the formation of phosphodiester linkages between 5'-phosphoryl and 3'-hydroxyl groups in double-stranded DNA using NAD as a coenzyme and as the energy source for the reaction. It is essential for DNA replication and repair of damaged DNA. In Salmonella schwarzengrund (strain CVM19633), this protein is DNA ligase.